The following is a 632-amino-acid chain: Cyclic GMP-AMP synthase-like receptor 2 (632 aa).

3 residues coordinate Mg(2+): Asp-71, Asp-73, and Asp-181. Asp-295 contributes to the Mn(2+) binding site.

Belongs to the mab-21 family. Requires Mg(2+) as cofactor. Mn(2+) serves as cofactor.

Nucleotidyltransferase that catalyzes the formation of some cyclic nucleotide and plays a key role in innate immunity. Directly binds some unknown ligand, activating the nucleotidyltransferase activity, leading to synthesis of a second messenger that binds to and activates Sting, thereby triggering the immune response via activation of the NF-kappa-B transcription factor. The protein is Cyclic GMP-AMP synthase-like receptor 2 of Crassostrea virginica (Eastern oyster).